The chain runs to 970 residues: Protein translocase subunit SecA (970 aa).

Residues Q99, 117–121 (GEGKT), and D631 contribute to the ATP site.

It belongs to the SecA family. Monomer and homodimer. Part of the essential Sec protein translocation apparatus which comprises SecA, SecYEG and auxiliary proteins SecDF. Other proteins may also be involved.

Its subcellular location is the cell inner membrane. The protein resides in the cytoplasm. The catalysed reaction is ATP + H2O + cellular proteinSide 1 = ADP + phosphate + cellular proteinSide 2.. Part of the Sec protein translocase complex. Interacts with the SecYEG preprotein conducting channel. Has a central role in coupling the hydrolysis of ATP to the transfer of proteins into and across the cell membrane, serving as an ATP-driven molecular motor driving the stepwise translocation of polypeptide chains across the membrane. The chain is Protein translocase subunit SecA from Chlamydia pneumoniae (Chlamydophila pneumoniae).